A 316-amino-acid polypeptide reads, in one-letter code: Beta-lactamase 3 (316 aa).

The N-terminal stretch at 1 to 29 (MFVLNKFFTNSHYKKIVPVVLLSCATLIG) is a signal peptide. C30 carries N-palmitoyl cysteine lipidation. C30 is lipidated: S-diacylglycerol cysteine. The tract at residues 34-53 (NTQSESNKQTNQTNQVKQEN) is disordered. Positions 40 to 50 (NKQTNQTNQVK) are enriched in low complexity. S95 serves as the catalytic Acyl-ester intermediate. E191 (proton acceptor) is an active-site residue. Substrate is bound at residue 257–259 (KTG).

It belongs to the class-A beta-lactamase family.

Its subcellular location is the cell membrane. It carries out the reaction a beta-lactam + H2O = a substituted beta-amino acid. The chain is Beta-lactamase 3 (blaZ) from Bacillus cereus.